Here is a 224-residue protein sequence, read N- to C-terminus: Prophage repressor CohE (224 aa).

The sequence is that of Prophage repressor CohE (cohE) from Escherichia coli (strain K12).